The chain runs to 634 residues: Frizzled and smoothened-like protein D (634 aa).

An N-terminal signal peptide occupies residues 1-21 (MINKFKFYLIFLKLILILVNC). Topologically, residues 22–257 (QNSLNDYGFG…QMDSVINMSK (236 aa)) are extracellular. The 145-residue stretch at 34–178 (DESSICTSYI…LTKYGYTANG (145 aa)) folds into the FZ domain. N-linked (GlcNAc...) asparagine glycans are attached at residues asparagine 126, asparagine 168, asparagine 215, asparagine 243, and asparagine 254. Residues 258–278 (AMSSISFVLSLFNVITFGLLI) form a helical membrane-spanning segment. The Cytoplasmic portion of the chain corresponds to 279–287 (KKKSKYNVC). The chain crosses the membrane as a helical span at residues 288 to 308 (IALMAIGSSFIYLSDIINYGV). Residues 309–335 (GIEKQLCPEPGRVATQRVDSLCGFTGS) lie on the Extracellular side of the membrane. A helical membrane pass occupies residues 336–356 (IFHIGITLCVLWSMTMGIVLY). Residues 357 to 368 (SKIKQFKLPNFR) are Cytoplasmic-facing. A helical membrane pass occupies residues 369 to 389 (YFLIGNLSFTVVTLIILASAK). Topologically, residues 390-410 (KFQGGNGFLECWMRDRWYVVA) are extracellular. A helical transmembrane segment spans residues 411 to 431 (IFWIPCGIALLLGVLSICGVI). At 432 to 454 (FEIYKISKNVSLKDSKVVIRELK) the chain is on the cytoplasmic side. A helical membrane pass occupies residues 455–475 (PFVLVVTVSASLIYLFVFYFD). The Extracellular segment spans residues 476–513 (SESKYDFYKKGVEDYILCLLTSENPLDECYTVGPNFNS). Residues 514-534 (YFMFYFLIRFFGILFFGIFGT) traverse the membrane as a helical segment. Topologically, residues 535–634 (SEIARNAWTE…MEIELDSIDI (100 aa)) are cytoplasmic. The disordered stretch occupies residues 560–624 (VSSSTRGGGG…NNNNNDNNNK (65 aa)). Composition is skewed to low complexity over residues 572–592 (SGIK…NNST) and 609–622 (DNTI…NDNN).

It belongs to the G-protein coupled receptor Fz/Smo family.

It is found in the membrane. This Dictyostelium discoideum (Social amoeba) protein is Frizzled and smoothened-like protein D (fslD).